The primary structure comprises 143 residues: Nucleoside diphosphate kinase (143 aa).

ATP is bound by residues Lys-11, Phe-59, Arg-87, Thr-93, Arg-104, and Asn-114. The Pros-phosphohistidine intermediate role is filled by His-117.

Belongs to the NDK family. Homotetramer. The cofactor is Mg(2+).

The protein resides in the cytoplasm. It carries out the reaction a 2'-deoxyribonucleoside 5'-diphosphate + ATP = a 2'-deoxyribonucleoside 5'-triphosphate + ADP. The catalysed reaction is a ribonucleoside 5'-diphosphate + ATP = a ribonucleoside 5'-triphosphate + ADP. Functionally, major role in the synthesis of nucleoside triphosphates other than ATP. The ATP gamma phosphate is transferred to the NDP beta phosphate via a ping-pong mechanism, using a phosphorylated active-site intermediate. This chain is Nucleoside diphosphate kinase, found in Shewanella piezotolerans (strain WP3 / JCM 13877).